We begin with the raw amino-acid sequence, 427 residues long: Acetylornithine aminotransferase (427 aa).

The interval 1–23 (MSLQTLIEQATNPPESGSAASSP) is disordered. Residues 124-125 (GA) and Phe157 contribute to the pyridoxal 5'-phosphate site. Arg160 provides a ligand contact to N(2)-acetyl-L-ornithine. 248-251 (DEVQ) is a pyridoxal 5'-phosphate binding site. Lys277 carries the N6-(pyridoxal phosphate)lysine modification. Position 304 (Ser304) interacts with N(2)-acetyl-L-ornithine. A pyridoxal 5'-phosphate-binding site is contributed by Thr305.

Belongs to the class-III pyridoxal-phosphate-dependent aminotransferase family. ArgD subfamily. As to quaternary structure, homodimer. It depends on pyridoxal 5'-phosphate as a cofactor.

Its subcellular location is the cytoplasm. The enzyme catalyses N(2)-acetyl-L-ornithine + 2-oxoglutarate = N-acetyl-L-glutamate 5-semialdehyde + L-glutamate. The protein operates within amino-acid biosynthesis; L-arginine biosynthesis; N(2)-acetyl-L-ornithine from L-glutamate: step 4/4. This Nostoc sp. (strain PCC 7120 / SAG 25.82 / UTEX 2576) protein is Acetylornithine aminotransferase.